A 226-amino-acid chain; its full sequence is Uracil-DNA glycosylase (226 aa).

The active-site Proton acceptor is the aspartate 64.

Belongs to the uracil-DNA glycosylase (UDG) superfamily. UNG family.

It is found in the cytoplasm. It carries out the reaction Hydrolyzes single-stranded DNA or mismatched double-stranded DNA and polynucleotides, releasing free uracil.. Functionally, excises uracil residues from the DNA which can arise as a result of misincorporation of dUMP residues by DNA polymerase or due to deamination of cytosine. This chain is Uracil-DNA glycosylase, found in Vibrio parahaemolyticus serotype O3:K6 (strain RIMD 2210633).